Consider the following 488-residue polypeptide: MAATAWGIRSSGIRGASPVMSACVSPAEVILGADHQQQMYCHLLCGLRRWDAVDCIRAPYAAALARALRLLQSKWRQLCDDLECGTVCADVVTDAAMRGAVQDGVLAGPCPELAGRVRRICERDDWRGVLRQLWPDARYISCVTTGTMEQYFPAIKHFAGEALPVLGTDYLASECAIGINLERTSPPEETTYVLLPRAAYFEFIPFDMDAAGRGAAAAEPVDIAGVEAGKTYELVATTFRGLYRYKVGDVVKIAGFHHSSPRLQFVTRAPPPQEHGEVLTERDVMAAMDTFQLMLKDGGEVIEFAAFIIDGDGGQRRRRCATIAVEVSNGSKLLDHERSAAFLRRCTAPLEGCLGGAYRLSRATGDVAPLEVAVVRPGTFDRLAEAAIRGGAPANQYKPPRSSGTGTSSMCCNPPWCAAAAQSLNQLLTSICLIVSLNQRQFLDRESNSGTDKVFISDSILNFQHWGGFSLRFDLQEESLTLYKDHPS.

This sequence belongs to the IAA-amido conjugating enzyme family. As to expression, expressed in roots and callus.

Functionally, may catalyze the synthesis of indole-3-acetic acid (IAA)-amino acid conjugates, providing a mechanism for the plant to cope with the presence of excess auxin. The sequence is that of Probable indole-3-acetic acid-amido synthetase GH3.6 (GH3.6) from Oryza sativa subsp. japonica (Rice).